We begin with the raw amino-acid sequence, 71 residues long: Conotoxin PnMEKL-032 (71 aa).

Residues 1-19 (MQKLIILLLVAAVLMSTQA) form the signal peptide. The propeptide occupies 20-46 (LFQEKRLKEKINFLSKEKADAEKQQKR). Disulfide bonds link cysteine 48–cysteine 62, cysteine 55–cysteine 66, and cysteine 61–cysteine 70.

The protein belongs to the conotoxin O2 superfamily. As to expression, expressed by the venom duct.

The protein resides in the secreted. The chain is Conotoxin PnMEKL-032 from Conus pennaceus (Feathered cone).